The chain runs to 1021 residues: Putative 115 kDa protein in type-1 retrotransposable element R1DM (1021 aa).

Positions 479–741 (RCIRLGYFPA…RSCRYLGITV (263 aa)) constitute a Reverse transcriptase domain. A gag-like cysteine motif region spans residues 955–971 (CACGDPYEDWMHILCAC).

This chain is Putative 115 kDa protein in type-1 retrotransposable element R1DM (R1A1-element\ORF2), found in Drosophila melanogaster (Fruit fly).